A 319-amino-acid chain; its full sequence is Ribonucleoside-diphosphate reductase small chain (319 aa).

D70, E101, and H104 together coordinate Fe cation. The active site involves Y108. Fe cation contacts are provided by E163, E197, and H200. Residues 313–319 (FSLDVDF) are interaction with R1.

This sequence belongs to the ribonucleoside diphosphate reductase small chain family. In terms of assembly, interacts with RNR1/OPG080 subunit. Can interact with host RNR1 supunit. It depends on Fe cation as a cofactor.

The enzyme catalyses a 2'-deoxyribonucleoside 5'-diphosphate + [thioredoxin]-disulfide + H2O = a ribonucleoside 5'-diphosphate + [thioredoxin]-dithiol. Ribonucleoside-diphosphate reductase holoenzyme provides the precursors necessary for viral DNA synthesis. Allows virus growth in non-dividing cells. Catalyzes the biosynthesis of deoxyribonucleotides from the corresponding ribonucleotides. The polypeptide is Ribonucleoside-diphosphate reductase small chain (OPG048) (Variola virus).